Reading from the N-terminus, the 244-residue chain is 3-deoxy-manno-octulosonate cytidylyltransferase (244 aa).

The protein belongs to the KdsB family.

Its subcellular location is the cytoplasm. It carries out the reaction 3-deoxy-alpha-D-manno-oct-2-ulosonate + CTP = CMP-3-deoxy-beta-D-manno-octulosonate + diphosphate. The protein operates within nucleotide-sugar biosynthesis; CMP-3-deoxy-D-manno-octulosonate biosynthesis; CMP-3-deoxy-D-manno-octulosonate from 3-deoxy-D-manno-octulosonate and CTP: step 1/1. It functions in the pathway bacterial outer membrane biogenesis; lipopolysaccharide biosynthesis. Its function is as follows. Activates KDO (a required 8-carbon sugar) for incorporation into bacterial lipopolysaccharide in Gram-negative bacteria. This Ruthia magnifica subsp. Calyptogena magnifica protein is 3-deoxy-manno-octulosonate cytidylyltransferase.